Reading from the N-terminus, the 601-residue chain is UBA domain-containing protein 3 (601 aa).

In terms of domain architecture, Arf-GAP spans Glu-7 to Asn-129. 2 disordered regions span residues Asp-123 to Tyr-158 and Glu-289 to Gly-310. The segment covering Thr-139–Ser-156 has biased composition (low complexity). Residues Arg-157–His-197 form the UBA domain.

The polypeptide is UBA domain-containing protein 3 (ucp3) (Schizosaccharomyces pombe (strain 972 / ATCC 24843) (Fission yeast)).